A 100-amino-acid polypeptide reads, in one-letter code: Ubiquitin-related modifier 1 homolog (100 aa).

Gly-100 is modified (1-thioglycine). Residue Gly-100 forms a Glycyl lysine isopeptide (Gly-Lys) (interchain with K-? in acceptor proteins) linkage.

This sequence belongs to the URM1 family. C-terminal thiocarboxylation occurs in 2 steps, it is first acyl-adenylated (-COAMP) via the hesA/moeB/thiF part of the MOCS3 homolog, then thiocarboxylated (-COSH) via the rhodanese domain of the MOCS3 homolog.

It localises to the cytoplasm. It participates in tRNA modification; 5-methoxycarbonylmethyl-2-thiouridine-tRNA biosynthesis. In terms of biological role, acts as a sulfur carrier required for 2-thiolation of mcm(5)S(2)U at tRNA wobble positions of cytosolic tRNA(Lys), tRNA(Glu) and tRNA(Gln). Serves as sulfur donor in tRNA 2-thiolation reaction by being thiocarboxylated (-COSH) at its C-terminus by MOCS3. The sulfur is then transferred to tRNA to form 2-thiolation of mcm(5)S(2)U. Also acts as a ubiquitin-like protein (UBL) that is covalently conjugated via an isopeptide bond to lysine residues of target proteins. The thiocarboxylated form serves as substrate for conjugation and oxidative stress specifically induces the formation of UBL-protein conjugates. The sequence is that of Ubiquitin-related modifier 1 homolog from Oryza sativa subsp. japonica (Rice).